The sequence spans 245 residues: E3 ubiquitin-protein ligase RNF138 (245 aa).

Alanine 2 bears the N-acetylalanine mark. The RING-type zinc-finger motif lies at 18 to 58 (CPVCQEVLKTPVRTTACQHVFCRKCFLTAMRESGAHCPLCR). Residues cysteine 86, cysteine 89, histidine 101, and cysteine 105 each contribute to the Zn(2+) site. Residues 86 to 105 (CRCCAKQIKFYRMRHHYKSC) form a C2HC RNF-type zinc finger. Positions 125–154 (QDSVGNSNRSETSTSDNTETYQENTSSSGH) are disordered. Position 142 is a phosphothreonine (threonine 142). 2 consecutive C2H2-type zinc fingers follow at residues 157–180 (FKCP…NSNH) and 187–215 (VTCP…NQRH). Residues 225-243 (LQLDEETQYQTAVEESFQV) form the UIM domain.

Interacts with NLK. Interacts with XRCC5/Ku80. Interacts with RBBP8/CtIP. Post-translationally, auto-ubiquitinated.

The protein resides in the chromosome. The catalysed reaction is S-ubiquitinyl-[E2 ubiquitin-conjugating enzyme]-L-cysteine + [acceptor protein]-L-lysine = [E2 ubiquitin-conjugating enzyme]-L-cysteine + N(6)-ubiquitinyl-[acceptor protein]-L-lysine.. The protein operates within protein modification; protein ubiquitination. Functionally, E3 ubiquitin-protein ligase involved in DNA damage response by promoting DNA resection and homologous recombination. Recruited to sites of double-strand breaks following DNA damage and specifically promotes double-strand break repair via homologous recombination. Two different, non-exclusive, mechanisms have been proposed. According to a report, regulates the choice of double-strand break repair by favoring homologous recombination over non-homologous end joining (NHEJ): acts by mediating ubiquitination of XRCC5/Ku80, leading to remove the Ku complex from DNA breaks, thereby promoting homologous recombination. According to another report, cooperates with UBE2Ds E2 ubiquitin ligases (UBE2D1, UBE2D2, UBE2D3 or UBE2D4) to promote homologous recombination by mediating ubiquitination of RBBP8/CtIP. Together with NLK, involved in the ubiquitination and degradation of TCF/LEF. Also exhibits auto-ubiquitination activity in combination with UBE2K. May act as a negative regulator in the Wnt/beta-catenin-mediated signaling pathway. This chain is E3 ubiquitin-protein ligase RNF138, found in Homo sapiens (Human).